The chain runs to 142 residues: Large ribosomal subunit protein uL11 (142 aa).

Belongs to the universal ribosomal protein uL11 family. As to quaternary structure, part of the ribosomal stalk of the 50S ribosomal subunit. Interacts with L10 and the large rRNA to form the base of the stalk. L10 forms an elongated spine to which L12 dimers bind in a sequential fashion forming a multimeric L10(L12)X complex. Post-translationally, one or more lysine residues are methylated.

In terms of biological role, forms part of the ribosomal stalk which helps the ribosome interact with GTP-bound translation factors. The protein is Large ribosomal subunit protein uL11 of Shewanella halifaxensis (strain HAW-EB4).